A 397-amino-acid polypeptide reads, in one-letter code: P2X purinoceptor 3 (397 aa).

Residues 1-20 lie on the Cytoplasmic side of the membrane; that stretch reads MNCISDFFTYETTKSVVVKS. Residues 21 to 43 form a helical membrane-spanning segment; the sequence is WTIGIINRAVQLLIISYFVGWVF. Over 44–322 the chain is Extracellular; it reads LHEKAYQVRD…AGKFNIIPTI (279 aa). ATP-binding residues include lysine 63 and lysine 65. Cystine bridges form between cysteine 107-cysteine 153, cysteine 116-cysteine 137, and cysteine 122-cysteine 147. Glutamate 111 is a binding site for Mg(2+). N-linked (GlcNAc...) asparagine glycosylation is present at asparagine 139. Aspartate 158 is a binding site for Mg(2+). Ca(2+) is bound at residue aspartate 158. The N-linked (GlcNAc...) asparagine glycan is linked to asparagine 170. Threonine 172 lines the ATP pocket. The N-linked (GlcNAc...) asparagine glycan is linked to asparagine 194. Intrachain disulfides connect cysteine 203–cysteine 213 and cysteine 247–cysteine 256. The ATP site is built by serine 275, asparagine 279, and arginine 281. Asparagine 290 carries an N-linked (GlcNAc...) asparagine glycan. Lysine 299 contributes to the ATP binding site. Residues 323 to 341 traverse the membrane as a helical segment; sequence ISSVAAFTSVGVGTVLCDI. Over 342–397 the chain is Cytoplasmic; sequence ILLNFLKGADHYKARKFEEVTETTLKGTASTNPVFASDQATVEKQSTDSGAYSIGH.

The protein belongs to the P2X receptor family. Homotrimer. Forms heterotrimer with P2RX2. Heterotrimeric P2RX2/3 has a ligand dose-response profile that is distinct from either homotrimeric P2RX2 or P2RX3. In terms of tissue distribution, selectively expressed in sensory ganglia.

Its subcellular location is the cell membrane. It carries out the reaction Ca(2+)(in) = Ca(2+)(out). The catalysed reaction is Na(+)(in) = Na(+)(out). Has high sensitivity to ATP. Fast activation by external ATP. Exhibits rapid desensitization. Sensitives to the ATP agonist:alpha/beta-methylene-ATP. Subject to allosteric inhibition by AF-219. Mg(2+) and Ca(2+) slow deactivation of P2RX3. Functionally, extracellular ATP-activated non-selective cation channel. Plays particularly important role in sensory neurons where its activation is critical for gustatory, nociceptive responses, visceral reflexes and sensory hypersensitization. The sequence is that of P2X purinoceptor 3 (P2rx3) from Rattus norvegicus (Rat).